Reading from the N-terminus, the 178-residue chain is Large ribosomal subunit protein uL6 (178 aa).

Belongs to the universal ribosomal protein uL6 family. As to quaternary structure, part of the 50S ribosomal subunit.

This protein binds to the 23S rRNA, and is important in its secondary structure. It is located near the subunit interface in the base of the L7/L12 stalk, and near the tRNA binding site of the peptidyltransferase center. This Staphylococcus carnosus (strain TM300) protein is Large ribosomal subunit protein uL6.